Consider the following 29-residue polypeptide: Cytochrome b6-f complex subunit 8 (29 aa).

The helical transmembrane segment at 3 to 23 threads the bilayer; the sequence is ILTLGWVSVLTLFTYSIAMVV.

This sequence belongs to the PetN family. In terms of assembly, the 4 large subunits of the cytochrome b6-f complex are cytochrome b6, subunit IV (17 kDa polypeptide, PetD), cytochrome f and the Rieske protein, while the 4 small subunits are PetG, PetL, PetM and PetN. The complex functions as a dimer.

The protein localises to the cellular thylakoid membrane. Its function is as follows. Component of the cytochrome b6-f complex, which mediates electron transfer between photosystem II (PSII) and photosystem I (PSI), cyclic electron flow around PSI, and state transitions. The polypeptide is Cytochrome b6-f complex subunit 8 (Acaryochloris marina (strain MBIC 11017)).